The chain runs to 191 residues: Protein GrpE (191 aa).

Basic and acidic residues-rich tracts occupy residues 1–19 and 29–42; these read MKDE…EPES and QQGE…EKEC. A disordered region spans residues 1 to 42; it reads MKDEHNQEHDHLSQKEPESYQKACACKEQQGEEKQEASEKEC.

It belongs to the GrpE family. Homodimer.

Its subcellular location is the cytoplasm. Its function is as follows. Participates actively in the response to hyperosmotic and heat shock by preventing the aggregation of stress-denatured proteins, in association with DnaK and GrpE. It is the nucleotide exchange factor for DnaK and may function as a thermosensor. Unfolded proteins bind initially to DnaJ; upon interaction with the DnaJ-bound protein, DnaK hydrolyzes its bound ATP, resulting in the formation of a stable complex. GrpE releases ADP from DnaK; ATP binding to DnaK triggers the release of the substrate protein, thus completing the reaction cycle. Several rounds of ATP-dependent interactions between DnaJ, DnaK and GrpE are required for fully efficient folding. In Helicobacter pylori (strain HPAG1), this protein is Protein GrpE.